The following is a 151-amino-acid chain: Large ribosomal subunit protein bL9 (151 aa).

Belongs to the bacterial ribosomal protein bL9 family.

Its function is as follows. Binds to the 23S rRNA. The chain is Large ribosomal subunit protein bL9 from Chlorobium chlorochromatii (strain CaD3).